Reading from the N-terminus, the 192-residue chain is Adapter protein MecA (192 aa).

Belongs to the MecA family. As to quaternary structure, homodimer.

Functionally, enables the recognition and targeting of unfolded and aggregated proteins to the ClpC protease or to other proteins involved in proteolysis. Acts negatively in the development of competence by binding ComK and recruiting it to the ClpCP protease. When overexpressed, inhibits sporulation. Also involved in Spx degradation by ClpC. The sequence is that of Adapter protein MecA from Oceanobacillus iheyensis (strain DSM 14371 / CIP 107618 / JCM 11309 / KCTC 3954 / HTE831).